We begin with the raw amino-acid sequence, 56 residues long: Ovomucoid (56 aa).

The Kazal-like domain occupies 6–56 (VDCSEYPKPDCTTEERPLCGSDNKTYGNKCNFCNAVVESNGTLTLSHFGKC). Disulfide bonds link Cys-8–Cys-38, Cys-16–Cys-35, and Cys-24–Cys-56. Residue Asn-45 is glycosylated (N-linked (GlcNAc...) asparagine).

The protein localises to the secreted. The protein is Ovomucoid of Francolinus pondicerianus (Grey francolin).